We begin with the raw amino-acid sequence, 97 residues long: MSVTKKDVEYVAELARLSFNEDEKESLASDLNQILNYVEKLQELDTEKEDIIVNPYYIENKFREDEITPSIKLEEVLENAPKTLEEYVLVPTIIREQ.

It belongs to the GatC family. In terms of assembly, heterotrimer of A, B and C subunits.

It carries out the reaction L-glutamyl-tRNA(Gln) + L-glutamine + ATP + H2O = L-glutaminyl-tRNA(Gln) + L-glutamate + ADP + phosphate + H(+). The enzyme catalyses L-aspartyl-tRNA(Asn) + L-glutamine + ATP + H2O = L-asparaginyl-tRNA(Asn) + L-glutamate + ADP + phosphate + 2 H(+). Its function is as follows. Allows the formation of correctly charged Asn-tRNA(Asn) or Gln-tRNA(Gln) through the transamidation of misacylated Asp-tRNA(Asn) or Glu-tRNA(Gln) in organisms which lack either or both of asparaginyl-tRNA or glutaminyl-tRNA synthetases. The reaction takes place in the presence of glutamine and ATP through an activated phospho-Asp-tRNA(Asn) or phospho-Glu-tRNA(Gln). In Clostridium botulinum (strain Eklund 17B / Type B), this protein is Aspartyl/glutamyl-tRNA(Asn/Gln) amidotransferase subunit C.